Here is a 475-residue protein sequence, read N- to C-terminus: ATP synthase subunit beta 1 (475 aa).

152–159 provides a ligand contact to ATP; that stretch reads GGAGVGKT.

Belongs to the ATPase alpha/beta chains family. F-type ATPases have 2 components, CF(1) - the catalytic core - and CF(0) - the membrane proton channel. CF(1) has five subunits: alpha(3), beta(3), gamma(1), delta(1), epsilon(1). CF(0) has four main subunits: a(1), b(1), b'(1) and c(9-12).

The protein localises to the cell inner membrane. It catalyses the reaction ATP + H2O + 4 H(+)(in) = ADP + phosphate + 5 H(+)(out). Its function is as follows. Produces ATP from ADP in the presence of a proton gradient across the membrane. The catalytic sites are hosted primarily by the beta subunits. This Cereibacter sphaeroides (strain ATCC 17029 / ATH 2.4.9) (Rhodobacter sphaeroides) protein is ATP synthase subunit beta 1.